Here is a 256-residue protein sequence, read N- to C-terminus: MTTQGVRIGIAGINGRVGRLLREEVTTGGGILSGGTARDAAPASDVFATLDALAPRCDVVIDFTHAATVRTHADILARAGVAWVLGTTGLSAADLEAVRTAAGRIPVVHAANYSPGVTLVTRLARQMAAALPSATYDAEILEMHHRQKVDAPSGTALAIGQAVADGRGIDLASHIEDGRTGHTGPRRADAIGFAVLRGGQIVGEHTVSFTSATEQIALTHRSFDRRIYATGAVRAALWLRGQASGLYDMEDVLGLD.

NAD(+) is bound by residues 12–17, Asp-39, 86–88, and 110–113; these read GINGRV, GTT, and AANY. His-144 serves as the catalytic Proton donor/acceptor. Residue His-145 coordinates (S)-2,3,4,5-tetrahydrodipicolinate. Lys-148 acts as the Proton donor in catalysis. Position 154 to 155 (154 to 155) interacts with (S)-2,3,4,5-tetrahydrodipicolinate; that stretch reads GT.

The protein belongs to the DapB family.

It localises to the cytoplasm. The enzyme catalyses (S)-2,3,4,5-tetrahydrodipicolinate + NAD(+) + H2O = (2S,4S)-4-hydroxy-2,3,4,5-tetrahydrodipicolinate + NADH + H(+). The catalysed reaction is (S)-2,3,4,5-tetrahydrodipicolinate + NADP(+) + H2O = (2S,4S)-4-hydroxy-2,3,4,5-tetrahydrodipicolinate + NADPH + H(+). It participates in amino-acid biosynthesis; L-lysine biosynthesis via DAP pathway; (S)-tetrahydrodipicolinate from L-aspartate: step 4/4. Catalyzes the conversion of 4-hydroxy-tetrahydrodipicolinate (HTPA) to tetrahydrodipicolinate. The sequence is that of 4-hydroxy-tetrahydrodipicolinate reductase from Gluconacetobacter diazotrophicus (strain ATCC 49037 / DSM 5601 / CCUG 37298 / CIP 103539 / LMG 7603 / PAl5).